A 156-amino-acid polypeptide reads, in one-letter code: MSRRHSAEKREIIPDAKYGDVVLTKFMNSIMYEGKKSTAERIVYGAFDIVENRARANPIEVFRAALDNVAPAIEVRSRRVGGATYQVPVEVRTERRQALAIRWLIQAARGRNDRTMIERLSAELLDAANNRGNAVKKREDTHRMAEANRAFSHYRW.

Belongs to the universal ribosomal protein uS7 family. Part of the 30S ribosomal subunit. Contacts proteins S9 and S11.

Its function is as follows. One of the primary rRNA binding proteins, it binds directly to 16S rRNA where it nucleates assembly of the head domain of the 30S subunit. Is located at the subunit interface close to the decoding center, probably blocks exit of the E-site tRNA. The protein is Small ribosomal subunit protein uS7 of Methylorubrum extorquens (strain CM4 / NCIMB 13688) (Methylobacterium extorquens).